The chain runs to 431 residues: Serine hydroxymethyltransferase 2 (431 aa).

Residues Leu-131 and 135 to 137 (GHL) contribute to the (6S)-5,6,7,8-tetrahydrofolate site. Lys-240 bears the N6-(pyridoxal phosphate)lysine mark.

The protein belongs to the SHMT family. Homodimer. Pyridoxal 5'-phosphate is required as a cofactor.

It is found in the cytoplasm. It catalyses the reaction (6R)-5,10-methylene-5,6,7,8-tetrahydrofolate + glycine + H2O = (6S)-5,6,7,8-tetrahydrofolate + L-serine. Its pathway is one-carbon metabolism; tetrahydrofolate interconversion. It functions in the pathway amino-acid biosynthesis; glycine biosynthesis; glycine from L-serine: step 1/1. Catalyzes the reversible interconversion of serine and glycine with tetrahydrofolate (THF) serving as the one-carbon carrier. This reaction serves as the major source of one-carbon groups required for the biosynthesis of purines, thymidylate, methionine, and other important biomolecules. Also exhibits THF-independent aldolase activity toward beta-hydroxyamino acids, producing glycine and aldehydes, via a retro-aldol mechanism. The sequence is that of Serine hydroxymethyltransferase 2 from Photobacterium profundum (strain SS9).